The primary structure comprises 423 residues: Serine hydroxymethyltransferase 2 (423 aa).

Residues Leu121 and 125–127 (GHL) each bind (6S)-5,6,7,8-tetrahydrofolate. Lys230 carries the N6-(pyridoxal phosphate)lysine modification. Position 356–358 (356–358 (SPF)) interacts with (6S)-5,6,7,8-tetrahydrofolate.

The protein belongs to the SHMT family. In terms of assembly, homodimer. Requires pyridoxal 5'-phosphate as cofactor.

The protein resides in the cytoplasm. It catalyses the reaction (6R)-5,10-methylene-5,6,7,8-tetrahydrofolate + glycine + H2O = (6S)-5,6,7,8-tetrahydrofolate + L-serine. It participates in one-carbon metabolism; tetrahydrofolate interconversion. The protein operates within amino-acid biosynthesis; glycine biosynthesis; glycine from L-serine: step 1/1. Its function is as follows. Catalyzes the reversible interconversion of serine and glycine with tetrahydrofolate (THF) serving as the one-carbon carrier. This reaction serves as the major source of one-carbon groups required for the biosynthesis of purines, thymidylate, methionine, and other important biomolecules. Also exhibits THF-independent aldolase activity toward beta-hydroxyamino acids, producing glycine and aldehydes, via a retro-aldol mechanism. This is Serine hydroxymethyltransferase 2 from Pectobacterium atrosepticum (strain SCRI 1043 / ATCC BAA-672) (Erwinia carotovora subsp. atroseptica).